The sequence spans 67 residues: Probable Sec-independent protein translocase protein TatE (67 aa).

The helical transmembrane segment at 4-21 (ISITKLLVVAALVVLLFG) threads the bilayer.

Belongs to the TatA/E family. TatE subfamily.

The protein localises to the cell inner membrane. Its function is as follows. Part of the twin-arginine translocation (Tat) system that transports large folded proteins containing a characteristic twin-arginine motif in their signal peptide across membranes. TatE shares overlapping functions with TatA. In Enterobacter cloacae subsp. cloacae (strain ATCC 13047 / DSM 30054 / NBRC 13535 / NCTC 10005 / WDCM 00083 / NCDC 279-56), this protein is Probable Sec-independent protein translocase protein TatE.